We begin with the raw amino-acid sequence, 414 residues long: Isocitrate dehydrogenase [NADP] cytoplasmic (414 aa).

Serine 2 carries the N-acetylserine modification. At tyrosine 42 the chain carries Phosphotyrosine. 75–77 (TIT) serves as a coordination point for NADP(+). Substrate is bound at residue threonine 77. Lysine 81 carries the N6-acetyllysine modification. Arginine 82 contacts NADP(+). Substrate-binding positions include 94–100 (SPNGTIR) and arginine 109. Residue lysine 126 is modified to N6-succinyllysine. The substrate site is built by arginine 132 and lysine 212. 3 positions are modified to N6-acetyllysine: lysine 224, lysine 233, and lysine 243. Position 252 (aspartate 252) interacts with Mn(2+). Lysine 260 contributes to the NADP(+) binding site. The Mn(2+) site is built by aspartate 275 and aspartate 279. 310–315 (GTVTRH) lines the NADP(+) pocket. Lysine 321 is modified (N6-acetyllysine). An NADP(+)-binding site is contributed by asparagine 328. Residue serine 389 is modified to Phosphoserine. Lysine 400 is modified (N6-succinyllysine).

The protein belongs to the isocitrate and isopropylmalate dehydrogenases family. As to quaternary structure, homodimer. It depends on Mg(2+) as a cofactor. Mn(2+) is required as a cofactor. Post-translationally, acetylation at Lys-374 dramatically reduces catalytic activity. In terms of tissue distribution, highly expressed in the liver followed by kidney, lower expression in spleen, brain and lung.

The protein localises to the cytoplasm. It is found in the cytosol. The enzyme catalyses D-threo-isocitrate + NADP(+) = 2-oxoglutarate + CO2 + NADPH. Irreversibly inhibited by Cd(2+) concentrations above 50 uM. Its function is as follows. Catalyzes the NADP(+)-dependent oxidative decarboxylation of isocitrate (D-threo-isocitrate) to 2-ketoglutarate (2-oxoglutarate), which is required by other enzymes such as the phytanoyl-CoA dioxygenase. Plays a critical role in the generation of NADPH, an important cofactor in many biosynthesis pathways. May act as a corneal epithelial crystallin and may be involved in maintaining corneal epithelial transparency. This chain is Isocitrate dehydrogenase [NADP] cytoplasmic (Idh1), found in Mus musculus (Mouse).